We begin with the raw amino-acid sequence, 549 residues long: Fumarate hydratase 1, mitochondrial (549 aa).

Cys-114 lines the [4Fe-4S] cluster pocket. (S)-malate is bound by residues 115-116, Arg-154, Gly-197, and 200-206; these read QD and NKSFLLQ. [4Fe-4S] cluster is bound by residues Cys-233 and Cys-328. (S)-malate is bound by residues Arg-404, 450–454, and Lys-474; that span reads TTAGR.

The protein belongs to the class-I fumarase family. In terms of assembly, homodimer. It depends on [4Fe-4S] cluster as a cofactor.

It is found in the mitochondrion. The enzyme catalyses (S)-malate = fumarate + H2O. It participates in carbohydrate metabolism; tricarboxylic acid cycle; (S)-malate from fumarate: step 1/1. Specifically and competitively inhibited by 2-thiomalate, which coordinates with the catalytic [4Fe-4S] cluster. Catalyzes the reversible hydration of fumarate to (S)-malate. Catalyzes the hydration of fumarate to L-malate in the tricarboxylic acid (TCA) cycle to facilitate a transition step in the production of energy in the form of NADH. The polypeptide is Fumarate hydratase 1, mitochondrial (Leishmania major).